A 341-amino-acid polypeptide reads, in one-letter code: Phosphate acyltransferase (341 aa).

Belongs to the PlsX family. In terms of assembly, homodimer. Probably interacts with PlsY.

The protein localises to the cytoplasm. The catalysed reaction is a fatty acyl-[ACP] + phosphate = an acyl phosphate + holo-[ACP]. The protein operates within lipid metabolism; phospholipid metabolism. Catalyzes the reversible formation of acyl-phosphate (acyl-PO(4)) from acyl-[acyl-carrier-protein] (acyl-ACP). This enzyme utilizes acyl-ACP as fatty acyl donor, but not acyl-CoA. The chain is Phosphate acyltransferase from Vibrio vulnificus (strain CMCP6).